We begin with the raw amino-acid sequence, 346 residues long: Acrosin (346 aa).

The first 19 residues, 1–19 (MALLLPLAVLLAACRPGHG), serve as a signal peptide directing secretion. 6 disulfide bridges follow: cysteine 24-cysteine 146, cysteine 27-cysteine 154, cysteine 70-cysteine 86, cysteine 168-cysteine 240, cysteine 203-cysteine 219, and cysteine 230-cysteine 260. The Peptidase S1 domain maps to 41–284 (VVGGTEALHG…FYNWILLQVR (244 aa)). The active-site Charge relay system is histidine 85. Asparagine 128 carries N-linked (GlcNAc...) asparagine glycosylation. Catalysis depends on aspartate 134, which acts as the Charge relay system. The N-linked (GlcNAc...) asparagine glycan is linked to asparagine 204. The active-site Charge relay system is the serine 234. The propeptide occupies 266-346 (PGIYTSTQHF…LLQSLWGSKA (81 aa)).

This sequence belongs to the peptidase S1 family. In terms of assembly, heavy chain (catalytic) and a light chain linked by two disulfide bonds. Post-translationally, glycosylated.

It catalyses the reaction Preferential cleavage: Arg-|-Xaa, Lys-|-Xaa.. Inhibited by aprotinin, ovomucoid, soybean trypsin inhibitor, benzamidine, p-aminobenzamidine, and zinc ions. Activity also inhibited by a Kazal-type proteinase inhibitor. Its function is as follows. Serine protease of trypsin-like cleavage specificity. Synthesized in a zymogen form, proacrosin and stored in the acrosome. In Meleagris gallopavo (Wild turkey), this protein is Acrosin.